The following is a 318-amino-acid chain: Ethylene-responsive transcription factor FZP (318 aa).

Residues 1–15 (MNTRGSGSSSSSSSS) are compositionally biased toward low complexity. Disordered stretches follow at residues 1–59 (MNTR…GRFL) and 158–178 (SYGH…SGAS). The span at 25 to 37 (PPKPASQPSPPSS) shows a compositional bias: pro residues. A DNA-binding region (AP2/ERF) is located at residues 57–114 (RFLGVRRRPWGRYAAEIRDPTTKERHWLGTFDTAQEAALAYDRAALSMKGAQARTNFV). Positions 160–171 (GHHHHHHHHHGH) are enriched in basic residues.

It belongs to the AP2/ERF transcription factor family. ERF subfamily.

The protein localises to the nucleus. Its function is as follows. Required to prevent the formation of axillary meristems within the spikelet meristem and permit the subsequent establishment of floral meristem identity. Mediates the transition from spikelet to floret meristem. Determines the transition from panicle branching to spikelet formation. May specify floral organ identity by regulating the class B genes (Agamous-like genes) MADS6 and MADS17, as well as class E genes MADS1, MADS7 and MADS8 in floral meristem. Possesses transactivation activity. In Oryza sativa subsp. japonica (Rice), this protein is Ethylene-responsive transcription factor FZP.